A 100-amino-acid polypeptide reads, in one-letter code: Small ribosomal subunit protein bS18c (100 aa).

Basic residues predominate over residues 1-19; that stretch reads MDKSKRPFRKSKRSFRRRL. Residues 1–23 form a disordered region; sequence MDKSKRPFRKSKRSFRRRLPPIG.

It belongs to the bacterial ribosomal protein bS18 family. In terms of assembly, part of the 30S ribosomal subunit.

The protein resides in the plastid. Its subcellular location is the chloroplast. This chain is Small ribosomal subunit protein bS18c, found in Calycanthus floridus var. glaucus (Eastern sweetshrub).